The primary structure comprises 248 residues: Tyrosine recombinase XerD-like (248 aa).

One can recognise a Core-binding (CB) domain in the interval 1-72 (MIAFIEPFLA…TVNQFLYYLY (72 aa)). The Tyr recombinase domain maps to 92–248 (SLKPQLTRLD…PITLEKYYKM (157 aa)). Arginine 213 is a catalytic residue. Residue tyrosine 245 is the O-(3'-phospho-DNA)-tyrosine intermediate of the active site.

This sequence belongs to the 'phage' integrase family. XerD-like subfamily.

The protein localises to the cytoplasm. In terms of biological role, putative tyrosine recombinase. Not involved in the cutting and rejoining of the recombining DNA molecules on dif(SL) site. This chain is Tyrosine recombinase XerD-like, found in Streptococcus equi subsp. zooepidemicus (strain H70).